The following is a 423-amino-acid chain: NDP-N-acetyl-D-galactosaminuronic acid dehydrogenase (423 aa).

11–28 (TISVVGLGYIGLPTATVL) is an NAD(+) binding site. Residue lysine 218 is the Proton donor/acceptor of the active site. The Nucleophile role is filled by cysteine 272.

The protein belongs to the UDP-glucose/GDP-mannose dehydrogenase family.

Functionally, probably involved in synthesis of sugar components of EPS I, by converting NDP-N-acetyl-D-galactosamine into NDP-N-acetyl-D-galactosaminuronic acid. This chain is NDP-N-acetyl-D-galactosaminuronic acid dehydrogenase (epsD), found in Ralstonia solanacearum (Pseudomonas solanacearum).